The chain runs to 383 residues: NADH-quinone oxidoreductase subunit D 1 (383 aa).

The protein belongs to the complex I 49 kDa subunit family. In terms of assembly, NDH-1 is composed of 14 different subunits. Subunits NuoB, C, D, E, F, and G constitute the peripheral sector of the complex.

It is found in the cell membrane. The catalysed reaction is a quinone + NADH + 5 H(+)(in) = a quinol + NAD(+) + 4 H(+)(out). NDH-1 shuttles electrons from NADH, via FMN and iron-sulfur (Fe-S) centers, to quinones in the respiratory chain. The immediate electron acceptor for the enzyme in this species is believed to be a menaquinone. Couples the redox reaction to proton translocation (for every two electrons transferred, four hydrogen ions are translocated across the cytoplasmic membrane), and thus conserves the redox energy in a proton gradient. In Streptomyces coelicolor (strain ATCC BAA-471 / A3(2) / M145), this protein is NADH-quinone oxidoreductase subunit D 1.